A 485-amino-acid polypeptide reads, in one-letter code: Cysteine--tRNA ligase (485 aa).

Cys-28 provides a ligand contact to Zn(2+). Positions 30-40 (MTVYDLCHVGH) match the 'HIGH' region motif. Positions 209, 234, and 238 each coordinate Zn(2+). The 'KMSKS' region motif lies at 266–270 (KMSKS). Lys-269 is a binding site for ATP.

This sequence belongs to the class-I aminoacyl-tRNA synthetase family. In terms of assembly, monomer. The cofactor is Zn(2+).

It is found in the cytoplasm. It carries out the reaction tRNA(Cys) + L-cysteine + ATP = L-cysteinyl-tRNA(Cys) + AMP + diphosphate. This chain is Cysteine--tRNA ligase, found in Nitrosococcus oceani (strain ATCC 19707 / BCRC 17464 / JCM 30415 / NCIMB 11848 / C-107).